Here is a 394-residue protein sequence, read N- to C-terminus: Protein-glutamate methylesterase/protein-glutamine glutaminase (394 aa).

A disordered region spans residues 1-24 (MSDGFGRPPPPAPAGHPTGAAGGD). The span at 15–24 (GHPTGAAGGD) shows a compositional bias: low complexity. Residues 27 to 145 (RVMVVDDSAV…EIGGADAFKR (119 aa)) enclose the Response regulatory domain. Position 78 is a 4-aspartylphosphate (aspartate 78). A CheB-type methylesterase domain is found at 191–393 (PAPAVGSVGQ…PYIRKFASRA (203 aa)). Residues serine 211, histidine 238, and aspartate 335 contribute to the active site.

The protein belongs to the CheB family. Post-translationally, phosphorylated by CheA. Phosphorylation of the N-terminal regulatory domain activates the methylesterase activity.

It localises to the cytoplasm. The enzyme catalyses [protein]-L-glutamate 5-O-methyl ester + H2O = L-glutamyl-[protein] + methanol + H(+). It catalyses the reaction L-glutaminyl-[protein] + H2O = L-glutamyl-[protein] + NH4(+). Its function is as follows. Involved in chemotaxis. Part of a chemotaxis signal transduction system that modulates chemotaxis in response to various stimuli. Catalyzes the demethylation of specific methylglutamate residues introduced into the chemoreceptors (methyl-accepting chemotaxis proteins or MCP) by CheR. Also mediates the irreversible deamidation of specific glutamine residues to glutamic acid. In Azospirillum brasilense, this protein is Protein-glutamate methylesterase/protein-glutamine glutaminase.